The sequence spans 498 residues: Minor fimbrium subunit Mfa1 (498 aa).

A signal peptide spans 1-19 (MKLNKMFLVGALLSLGFAS). Residue C20 is the site of N-palmitoyl cysteine attachment. A lipid anchor (S-diacylglycerol cysteine) is attached at C20. Residues 20 to 50 (CSKEGNGPAPDSSSTADTHMSVSMSLPQHNR) constitute a propeptide that is removed on maturation. The interval 436-476 (SGNPFVPTDPDPNNPDTPDNPDTPDPEDPDTPNPEEPLPVQ) is disordered.

Belongs to the bacteroidetes fimbrillin superfamily. FimA/Mfa1 family. As to quaternary structure, structural component of the fimbrial stalk. Minor fimbriae are composed of a structural subunit, most often Mfa1, and the accessory subunits Mfa3, Mfa4 and Mfa5. Mfa1 interacts with Mfa2; this anchors the fimbrium in the membrane. Fimbrium assembly occurs by linear, head-to-tail oligomerization of fimbrial subunits. This is mediated via insertion of a C-terminal beta-strand from one subunit into a groove in the N-terminal domain of the following subunit.

It localises to the fimbrium. Its subcellular location is the cell outer membrane. Structural subunit of the minor fimbriae. These filamentous pili are attached to the cell surface; they mediate biofilm formation, adhesion onto host cells and onto other bacteria that are part of the oral microbiome. They play an important role in invasion of periodontal tissues and are recognized as major virulence factors. Mfa1 orthologs from different strains have highly divergent sequences, and this correlates with pathogenicity. In Porphyromonas gingivalis (Bacteroides gingivalis), this protein is Minor fimbrium subunit Mfa1.